Here is a 1889-residue protein sequence, read N- to C-terminus: Treslin (1889 aa).

9 positions are modified to phosphoserine: Ser295, Ser599, Ser820, Ser861, Ser919, Ser934, Ser1002, Ser1027, and Ser1078. A compositionally biased stretch (low complexity) spans 812–832 (DSMSQESMSPPPSSSTHRSVS). The segment at 812-836 (DSMSQESMSPPPSSSTHRSVSAITE) is disordered. The tract at residues 979–1063 (RLLHRQIKGR…RENFPVQSIQ (85 aa)) is disordered. Positions 1020–1050 (LSFSRTNSGSFYSVSQPKSRSVQRIHSSQQE) are enriched in polar residues. Disordered stretches follow at residues 1098–1421 (EIST…SQFS), 1471–1508 (LPGE…SSSE), 1520–1543 (GKQR…SPQT), 1630–1714 (SCTP…SLEQ), 1730–1751 (VCQL…ETSW), and 1841–1875 (QGRT…TLSR). The segment covering 1127–1179 (TAQTLLYTPERLQNSPTEMTSAEGTISEATIKTPSSHGYNSPFASKVTSQKTV) has biased composition (polar residues). The residue at position 1134 (Thr1134) is a Phosphothreonine. At Ser1141 the chain carries Phosphoserine. The segment covering 1187 to 1197 (SPPLTKLPSTP) has biased composition (low complexity). Residues 1203–1219 (QPPQCSSDCTWPHSVNS) are compositionally biased toward polar residues. A compositionally biased stretch (low complexity) spans 1339–1351 (TSPSVTSSVSCPV). Residues 1373–1382 (KLRRSCRKKS) show a composition bias toward basic residues. At Ser1406 the chain carries Phosphoserine. Residues 1496–1508 (LVPAPSSVSSSSE) are compositionally biased toward low complexity. Polar residues-rich tracts occupy residues 1525–1543 (DAAQ…SPQT) and 1652–1662 (WTPSPKQSGKT). Basic and acidic residues predominate over residues 1705-1714 (PEGKERSLEQ).

The protein belongs to the treslin family. As to quaternary structure, interacts with TOPBP1 (via BRCT domains); interaction takes place in a CDK2-dependent manner. Component of the replisome complex composed of at least DONSON, MCM2, MCM7, PCNA and TICRR.

It localises to the nucleus. Functionally, regulator of DNA replication and S/M and G2/M checkpoints. Regulates the triggering of DNA replication initiation via its interaction with TOPBP1 by participating in CDK2-mediated loading of CDC45L onto replication origins. Required for the transition from pre-replication complex (pre-RC) to pre-initiation complex (pre-IC). Required to prevent mitotic entry after treatment with ionizing radiation. This chain is Treslin (Ticrr), found in Mus musculus (Mouse).